The sequence spans 447 residues: Methylenetetrahydrofolate--tRNA-(uracil-5-)-methyltransferase TrmFO (447 aa).

An FAD-binding site is contributed by 10-15; it reads GAGLAG.

Belongs to the MnmG family. TrmFO subfamily. FAD serves as cofactor.

The protein resides in the cytoplasm. The catalysed reaction is uridine(54) in tRNA + (6R)-5,10-methylene-5,6,7,8-tetrahydrofolate + NADH + H(+) = 5-methyluridine(54) in tRNA + (6S)-5,6,7,8-tetrahydrofolate + NAD(+). It catalyses the reaction uridine(54) in tRNA + (6R)-5,10-methylene-5,6,7,8-tetrahydrofolate + NADPH + H(+) = 5-methyluridine(54) in tRNA + (6S)-5,6,7,8-tetrahydrofolate + NADP(+). In terms of biological role, catalyzes the folate-dependent formation of 5-methyl-uridine at position 54 (M-5-U54) in all tRNAs. The polypeptide is Methylenetetrahydrofolate--tRNA-(uracil-5-)-methyltransferase TrmFO (Symbiobacterium thermophilum (strain DSM 24528 / JCM 14929 / IAM 14863 / T)).